The chain runs to 175 residues: MRIPTSADIACGGNIIIRIAIKNSDIFILQPLRFCILPWFIARKRSPDSCWWQEYENYPPAFLKPFLFSSGYDQSQRRSRHRAYMHINQLASDLFWNAEFIPAIVHFFPEHRIFQIIFAFWREGFFAAPEARTGKKYRVIDIKPHRHCGTALRGYFQFVRPKPNEWVPVQQAWQR.

This is an uncharacterized protein from Escherichia coli.